The following is a 399-amino-acid chain: Elongation factor Tu (399 aa).

A tr-type G domain is found at 10–209 (KPHVNVGTIG…EVDKYIPTPQ (200 aa)). Positions 19–26 (GHVDHGKT) are G1. 19-26 (GHVDHGKT) provides a ligand contact to GTP. Residue T26 participates in Mg(2+) binding. The segment at 60 to 64 (GITIA) is G2. Residues 81–84 (DCPG) are G3. Residues 81–85 (DCPGH) and 136–139 (NKQD) contribute to the GTP site. Residues 136 to 139 (NKQD) form a G4 region. A G5 region spans residues 174-176 (SAL).

This sequence belongs to the TRAFAC class translation factor GTPase superfamily. Classic translation factor GTPase family. EF-Tu/EF-1A subfamily. Monomer.

Its subcellular location is the cytoplasm. It catalyses the reaction GTP + H2O = GDP + phosphate + H(+). GTP hydrolase that promotes the GTP-dependent binding of aminoacyl-tRNA to the A-site of ribosomes during protein biosynthesis. The polypeptide is Elongation factor Tu (Helicobacter hepaticus (strain ATCC 51449 / 3B1)).